The sequence spans 276 residues: Imidazole glycerol phosphate synthase subunit HisF (276 aa).

Active-site residues include aspartate 11 and aspartate 130.

Belongs to the HisA/HisF family. In terms of assembly, heterodimer of HisH and HisF.

It is found in the cytoplasm. It carries out the reaction 5-[(5-phospho-1-deoxy-D-ribulos-1-ylimino)methylamino]-1-(5-phospho-beta-D-ribosyl)imidazole-4-carboxamide + L-glutamine = D-erythro-1-(imidazol-4-yl)glycerol 3-phosphate + 5-amino-1-(5-phospho-beta-D-ribosyl)imidazole-4-carboxamide + L-glutamate + H(+). It participates in amino-acid biosynthesis; L-histidine biosynthesis; L-histidine from 5-phospho-alpha-D-ribose 1-diphosphate: step 5/9. Functionally, IGPS catalyzes the conversion of PRFAR and glutamine to IGP, AICAR and glutamate. The HisF subunit catalyzes the cyclization activity that produces IGP and AICAR from PRFAR using the ammonia provided by the HisH subunit. This chain is Imidazole glycerol phosphate synthase subunit HisF, found in Beijerinckia indica subsp. indica (strain ATCC 9039 / DSM 1715 / NCIMB 8712).